The sequence spans 491 residues: Probable Xaa-Pro aminopeptidase An01g13040 (491 aa).

4 residues coordinate Mn(2+): Asp-276, Asp-287, Glu-420, and Glu-459.

The protein belongs to the peptidase M24B family. Mn(2+) serves as cofactor.

The enzyme catalyses Release of any N-terminal amino acid, including proline, that is linked to proline, even from a dipeptide or tripeptide.. Catalyzes the removal of a penultimate prolyl residue from the N-termini of peptides. This is Probable Xaa-Pro aminopeptidase An01g13040 from Aspergillus niger (strain ATCC MYA-4892 / CBS 513.88 / FGSC A1513).